Consider the following 109-residue polypeptide: MKQSNLCPDCARAALRLPRQAGRGAIWLYRHTLSPLVGYHCRHLPTCSVYGDEAIGRFGLWAGGWMTLARLLRCQPWGTSGIDNVPAEPPGGARWYLPWRYGRWRGVND.

The protein belongs to the UPF0161 family.

The protein resides in the cell inner membrane. Could be involved in insertion of integral membrane proteins into the membrane. This is Putative membrane protein insertion efficiency factor from Rhodopseudomonas palustris (strain BisA53).